A 303-amino-acid chain; its full sequence is L(+)-tartrate dehydratase subunit alpha (303 aa).

Residues cysteine 71, cysteine 190, and cysteine 277 each contribute to the iron-sulfur cluster site.

The protein belongs to the class-I fumarase family. Tetramer of two alpha and two beta subunits. It depends on iron-sulfur cluster as a cofactor.

It catalyses the reaction (2R,3R)-tartrate = oxaloacetate + H2O. The protein is L(+)-tartrate dehydratase subunit alpha (ttdA) of Escherichia coli O6:H1 (strain CFT073 / ATCC 700928 / UPEC).